We begin with the raw amino-acid sequence, 1331 residues long: uncharacterized protein (1331 aa).

8 consecutive transmembrane segments (helical) span residues Val-373–Val-393, Ala-487–Ile-507, Leu-534–Ile-554, Val-579–Leu-599, Leu-653–Thr-673, Val-1206–Ile-1226, Ile-1255–Leu-1275, and Ala-1297–Leu-1317.

This sequence belongs to the ABC-4 integral membrane protein family.

It localises to the cell membrane. This is an uncharacterized protein from Mycoplasma genitalium (strain ATCC 33530 / DSM 19775 / NCTC 10195 / G37) (Mycoplasmoides genitalium).